The sequence spans 121 residues: NAD(P)H-quinone oxidoreductase subunit 3, chloroplastic (121 aa).

Helical transmembrane passes span 10-30 (FWAF…VSNL), 65-85 (MFAL…PWAM), and 90-110 (LGII…IGLI).

The protein belongs to the complex I subunit 3 family. As to quaternary structure, NDH is composed of at least 16 different subunits, 5 of which are encoded in the nucleus.

It is found in the plastid. Its subcellular location is the chloroplast thylakoid membrane. It carries out the reaction a plastoquinone + NADH + (n+1) H(+)(in) = a plastoquinol + NAD(+) + n H(+)(out). It catalyses the reaction a plastoquinone + NADPH + (n+1) H(+)(in) = a plastoquinol + NADP(+) + n H(+)(out). Functionally, NDH shuttles electrons from NAD(P)H:plastoquinone, via FMN and iron-sulfur (Fe-S) centers, to quinones in the photosynthetic chain and possibly in a chloroplast respiratory chain. The immediate electron acceptor for the enzyme in this species is believed to be plastoquinone. Couples the redox reaction to proton translocation, and thus conserves the redox energy in a proton gradient. This chain is NAD(P)H-quinone oxidoreductase subunit 3, chloroplastic, found in Staurastrum punctulatum (Green alga).